The primary structure comprises 869 residues: Bifunctional uridylyltransferase/uridylyl-removing enzyme (869 aa).

Residues 1–332 (MTDTPAERPD…QFDGEATPEP (332 aa)) are uridylyltransferase. Residues 333–691 (LGGGFSLRRG…RRAVPDNDAL (359 aa)) form a uridylyl-removing region. The HD domain maps to 450 to 572 (VDQHTLMVLR…VGTRERLDYL (123 aa)). ACT domains lie at 692–774 (EVFV…RAVP) and 798–869 (RISL…LDPV).

The protein belongs to the GlnD family. The cofactor is Mg(2+).

The catalysed reaction is [protein-PII]-L-tyrosine + UTP = [protein-PII]-uridylyl-L-tyrosine + diphosphate. It carries out the reaction [protein-PII]-uridylyl-L-tyrosine + H2O = [protein-PII]-L-tyrosine + UMP + H(+). With respect to regulation, uridylyltransferase (UTase) activity is inhibited by glutamine, while glutamine activates uridylyl-removing (UR) activity. Modifies, by uridylylation and deuridylylation, the PII regulatory proteins (GlnB and homologs), in response to the nitrogen status of the cell that GlnD senses through the glutamine level. Under low glutamine levels, catalyzes the conversion of the PII proteins and UTP to PII-UMP and PPi, while under higher glutamine levels, GlnD hydrolyzes PII-UMP to PII and UMP (deuridylylation). Thus, controls uridylylation state and activity of the PII proteins, and plays an important role in the regulation of nitrogen assimilation and metabolism. This is Bifunctional uridylyltransferase/uridylyl-removing enzyme from Xanthomonas axonopodis pv. citri (strain 306).